A 124-amino-acid chain; its full sequence is Small ribosomal subunit protein uS12 (124 aa).

Asp-90 is subject to 3-methylthioaspartic acid.

It belongs to the universal ribosomal protein uS12 family. In terms of assembly, part of the 30S ribosomal subunit. Contacts proteins S8 and S17. May interact with IF1 in the 30S initiation complex.

With S4 and S5 plays an important role in translational accuracy. Its function is as follows. Interacts with and stabilizes bases of the 16S rRNA that are involved in tRNA selection in the A site and with the mRNA backbone. Located at the interface of the 30S and 50S subunits, it traverses the body of the 30S subunit contacting proteins on the other side and probably holding the rRNA structure together. The combined cluster of proteins S8, S12 and S17 appears to hold together the shoulder and platform of the 30S subunit. In Wolbachia pipientis wMel, this protein is Small ribosomal subunit protein uS12.